Consider the following 171-residue polypeptide: Lipoprotein signal peptidase (171 aa).

3 consecutive transmembrane segments (helical) span residues 7–27 (GLLA…GLYF), 64–84 (IGRW…GLWM), and 88–108 (TSRL…GNAI). Catalysis depends on residues Asp-118 and Asp-136. Residues 128 to 148 (SWYVFNVADAAIVAGVIGLIL) traverse the membrane as a helical segment.

It belongs to the peptidase A8 family.

It is found in the cell inner membrane. The catalysed reaction is Release of signal peptides from bacterial membrane prolipoproteins. Hydrolyzes -Xaa-Yaa-Zaa-|-(S,diacylglyceryl)Cys-, in which Xaa is hydrophobic (preferably Leu), and Yaa (Ala or Ser) and Zaa (Gly or Ala) have small, neutral side chains.. It functions in the pathway protein modification; lipoprotein biosynthesis (signal peptide cleavage). Its function is as follows. This protein specifically catalyzes the removal of signal peptides from prolipoproteins. The sequence is that of Lipoprotein signal peptidase from Methylobacterium radiotolerans (strain ATCC 27329 / DSM 1819 / JCM 2831 / NBRC 15690 / NCIMB 10815 / 0-1).